The primary structure comprises 289 residues: Inorganic pyrophosphatase (289 aa).

Arginine 80 serves as a coordination point for diphosphate. Mg(2+) contacts are provided by aspartate 117, aspartate 122, and aspartate 154.

Belongs to the PPase family. Homodimer. It depends on Mg(2+) as a cofactor.

The protein localises to the cytoplasm. It catalyses the reaction diphosphate + H2O = 2 phosphate + H(+). In Schizosaccharomyces pombe (strain 972 / ATCC 24843) (Fission yeast), this protein is Inorganic pyrophosphatase (ppa1).